Here is a 126-residue protein sequence, read N- to C-terminus: uncharacterized protein (126 aa).

The next 2 membrane-spanning stretches (helical) occupy residues leucine 21 to serine 43 and serine 48 to leucine 70.

Its subcellular location is the membrane. This is an uncharacterized protein from Saccharomyces cerevisiae (strain ATCC 204508 / S288c) (Baker's yeast).